Reading from the N-terminus, the 440-residue chain is VGFKAGVRDYRLTYYTPEYKTKDTDILAAFRMTPQPGVPAEEAGAAVAAESSTGTWTTVWTDGLTSLDRYKGRCYDIEPVAGEENQYIAYVAYPLDLFEEGSVTNLFTSIVGNVFGFKALRALRLEDLRIPPAYSKTFIGPPHGIQVERDKLNKYGRPLLGCTIKPKLGLSAKNYGRAVYECLRGGLDFTKDDENVNSQPFMRWRDRFLFVAEALFKSQAETGEIKGHYLNATAGTCEEMLKRAAFARELGAPIVMHDYLTGGFTANTSLAFYCRDNGLLLHIHRAMHAVIDRQRNHGMHFRVLAKALRMSGGDHIHAGTVVGKLEGEREVTLGFVDLLRDDYIEKDRSRGIYFTQDWVSMPGVLPVASGGIHVWHMPALTEIFGDDSVLQFGGGTLGHPWGNAPGAVANRVALEACVQARNEGRDLAREGNEIIRERSK.

K4 is subject to N6,N6,N6-trimethyllysine. Substrate-binding residues include N113 and T163. The active-site Proton acceptor is K165. K167 is a binding site for substrate. 3 residues coordinate Mg(2+): K191, D193, and E194. The residue at position 191 (K191) is an N6-carboxylysine. H284 functions as the Proton acceptor in the catalytic mechanism. Substrate-binding residues include R285, H317, and S369.

The protein belongs to the RuBisCO large chain family. Type I subfamily. In terms of assembly, heterohexadecamer of 8 large chains and 8 small chains; disulfide-linked. The disulfide link is formed within the large subunit homodimers. Mg(2+) is required as a cofactor. In terms of processing, the disulfide bond which can form in the large chain dimeric partners within the hexadecamer appears to be associated with oxidative stress and protein turnover.

The protein resides in the plastid. The protein localises to the chloroplast. It catalyses the reaction 2 (2R)-3-phosphoglycerate + 2 H(+) = D-ribulose 1,5-bisphosphate + CO2 + H2O. It carries out the reaction D-ribulose 1,5-bisphosphate + O2 = 2-phosphoglycolate + (2R)-3-phosphoglycerate + 2 H(+). In terms of biological role, ruBisCO catalyzes two reactions: the carboxylation of D-ribulose 1,5-bisphosphate, the primary event in carbon dioxide fixation, as well as the oxidative fragmentation of the pentose substrate in the photorespiration process. Both reactions occur simultaneously and in competition at the same active site. The polypeptide is Ribulose bisphosphate carboxylase large chain (Onoclea sensibilis (Sensitive fern)).